A 317-amino-acid polypeptide reads, in one-letter code: WD repeat-containing protein 82 (317 aa).

WD repeat units follow at residues 21–60 (ENTDKINAIDFAPNGEHLISCSEDDQIVIYDCEKGTQSRT), 107–146 (GHTKKVISLCISPVEDTFLSGSLDKTLRLWDLRSPNCQGL), 148–186 (HLSGRPIAAYDPEGLIFAAGVNSESIKLYDLRSFDKGPF), 194–233 (EKECDWTGLKFSRDGKTILISTNGSVIRLVDAFHGTPLQT), 238–278 (PNNK…KVSV), and 282–317 (DHPGPVQCVQFNPKYMMLASACTNMAFWLPTSEEGL).

Belongs to the WD repeat SWD2 family. Component of the SET1 complex, composed at least of the catalytic subunit Set1, wds/WDR5, Wdr82, Rbbp5, ash2, Cfp1/CXXC1, hcf and Dpy-30L1. Interacts with male-specific lethal (MSL) histone acetyltransferase complex at least composed of mof, msl-1, msl-2 and msl-3. Interacts with su(sable).

Its subcellular location is the nucleus. In terms of biological role, component of the SET1 complex that specifically di- and trimethylates 'Lys-4' of histone H3. Together with su(sable), part of a transcription termination checkpoint that promotes transcription termination of aberrant RNAs and their subsequent degradation by the nuclear exosome. The protein is WD repeat-containing protein 82 of Drosophila melanogaster (Fruit fly).